The following is a 258-amino-acid chain: 5'-nucleotidase SurE (258 aa).

A divalent metal cation is bound by residues D8, D9, S40, and N98.

It belongs to the SurE nucleotidase family. A divalent metal cation is required as a cofactor.

The protein localises to the cytoplasm. It catalyses the reaction a ribonucleoside 5'-phosphate + H2O = a ribonucleoside + phosphate. Nucleotidase that shows phosphatase activity on nucleoside 5'-monophosphates. The protein is 5'-nucleotidase SurE of Synechococcus elongatus (strain ATCC 33912 / PCC 7942 / FACHB-805) (Anacystis nidulans R2).